The primary structure comprises 292 residues: Glycine--tRNA ligase alpha subunit (292 aa).

It belongs to the class-II aminoacyl-tRNA synthetase family. Tetramer of two alpha and two beta subunits.

It localises to the cytoplasm. The catalysed reaction is tRNA(Gly) + glycine + ATP = glycyl-tRNA(Gly) + AMP + diphosphate. The protein is Glycine--tRNA ligase alpha subunit of Buchnera aphidicola subsp. Schizaphis graminum (strain Sg).